The following is a 240-amino-acid chain: Small ribosomal subunit protein uS3 (240 aa).

Positions 39–109 (IRQHIDANLN…QIRINVVEVN (71 aa)) constitute a KH type-2 domain. Residues 216-240 (TSAANAAPLPRRKSRRQQFEDRSEQ) form a disordered region.

Belongs to the universal ribosomal protein uS3 family. As to quaternary structure, part of the 30S ribosomal subunit. Forms a tight complex with proteins S10 and S14.

Its function is as follows. Binds the lower part of the 30S subunit head. Binds mRNA in the 70S ribosome, positioning it for translation. In Picosynechococcus sp. (strain ATCC 27264 / PCC 7002 / PR-6) (Agmenellum quadruplicatum), this protein is Small ribosomal subunit protein uS3.